An 84-amino-acid chain; its full sequence is Magnetosome protein MamR (84 aa).

The protein belongs to the magnetosome MamR family.

Its subcellular location is the magnetosome. Its function is as follows. May play a role in controlling magnetite number and size. Coexpression of mamLQRBIEMO in a deletion of the 17 gene mamAB operon restores magnetosome vesicle formation but not magnetite biosynthesis. This is Magnetosome protein MamR from Magnetospirillum gryphiswaldense (strain DSM 6361 / JCM 21280 / NBRC 15271 / MSR-1).